Reading from the N-terminus, the 328-residue chain is NADH-quinone oxidoreductase subunit H 1 (328 aa).

The next 8 membrane-spanning stretches (helical) occupy residues 11–31, 81–101, 116–136, 154–174, 189–209, 235–257, 269–289, and 308–328; these read VVKA…FLLF, LAPV…PWAP, VLVI…GGWA, ISYE…TGSV, LFPQ…EAGW, GLFF…TFFL, IPGF…LYWI, and VLLP…ALWA.

This sequence belongs to the complex I subunit 1 family. NDH-1 is composed of 14 different subunits. Subunits NuoA, H, J, K, L, M, N constitute the membrane sector of the complex.

The protein resides in the cell membrane. The enzyme catalyses a quinone + NADH + 5 H(+)(in) = a quinol + NAD(+) + 4 H(+)(out). Functionally, NDH-1 shuttles electrons from NADH, via FMN and iron-sulfur (Fe-S) centers, to quinones in the respiratory chain. The immediate electron acceptor for the enzyme in this species is believed to be ubiquinone. Couples the redox reaction to proton translocation (for every two electrons transferred, four hydrogen ions are translocated across the cytoplasmic membrane), and thus conserves the redox energy in a proton gradient. This subunit may bind ubiquinone. This chain is NADH-quinone oxidoreductase subunit H 1, found in Symbiobacterium thermophilum (strain DSM 24528 / JCM 14929 / IAM 14863 / T).